Here is a 600-residue protein sequence, read N- to C-terminus: MMRAMWEALAALAAVSCLVGAVRGGPGLSMFAGQAAQPDPCSDENGHPRRCIPDFVNAAFGKDVRVSSTCGRPPARYCVVSERGEERLRSCHLCNASDPKKAHPPAFLTDLNNPHNLTCWQSENYLQFPHNVTLTLSLGKKFEVTYVSLQFCSPRPESMAIYKSMDYGRTWVPFQFYSTQCRKMYNRPHRAPITKQNEQEAVCTDSHTDMRPLSGGLIAFSTLDGRPSAHDFDNSPVLQDWVTATDIRVAFSRLHTFGDENEDDSELARDSYFYAVSDLQVGGRCKCNGHAARCVRDRDDSLVCDCRHNTAGPECDRCKPFHYDRPWQRATAREANECVACNCNLHARRCRFNMELYKLSGRKSGGVCLNCRHNTAGRHCHYCKEGYFRDLGKPITHRKACKACDCHPVGAAGKTCNQTTGQCPCKDGVTGVTCNRCAKGYQQSRSPIAPCIKIPVAPPTTAASSVEEPEDCDSYCKASKGKLKINMKKYCKKDYAVQIHILKADKAGDWWKFTVNIISVYKQGASRIRRGDQNLWIRSRDIACKCPKIKPLKKYLLLGNAEDSPDQSGIVADKSSLVIQWRDTWARRLRKFQQREKKEL.

The first 24 residues, Met-1–Gly-24, serve as a signal peptide directing secretion. Positions His-47–Arg-284 constitute a Laminin N-terminal domain. 3 N-linked (GlcNAc...) asparagine glycosylation sites follow: Asn-95, Asn-116, and Asn-131. Disulfide bonds link Cys-119–Cys-152, Cys-285–Cys-294, Cys-287–Cys-304, Cys-306–Cys-315, Cys-318–Cys-338, Cys-341–Cys-350, Cys-343–Cys-368, Cys-371–Cys-380, Cys-383–Cys-401, Cys-404–Cys-416, Cys-406–Cys-423, Cys-425–Cys-434, Cys-437–Cys-451, and Cys-472–Cys-544. Laminin EGF-like domains are found at residues Cys-285–Ala-340, Cys-341–Ala-403, and Cys-404–Lys-453. An N-linked (GlcNAc...) asparagine glycan is attached at Asn-417. The region spanning Cys-472 to Leu-600 is the NTR domain. Residues Arg-530–Asp-532 carry the Cell attachment site motif.

In terms of assembly, binds to its receptors; DCC, UNC5A, UNC5B, UNC5C and probably UNC5D. Binds to its receptor; DSCAM. Interacts with APP.

It localises to the secreted. The protein localises to the cytoplasm. Netrins control guidance of CNS commissural axons and peripheral motor axons. Its association with either DCC or some UNC5 receptors will lead to axon attraction or repulsion, respectively. Binding to UNC5C might cause dissociation of UNC5C from polymerized TUBB3 in microtubules and thereby lead to increased microtubule dynamics and axon repulsion. Involved in dorsal root ganglion axon projection towards the spinal cord. It also serves as a survival factor via its association with its receptors which prevent the initiation of apoptosis. Involved in colorectal tumorigenesis by regulating apoptosis. The sequence is that of Netrin-1 (NTN1) from Sus scrofa (Pig).